The following is a 369-amino-acid chain: Uroporphyrinogen decarboxylase (369 aa).

Substrate is bound by residues 36–40 (RQAGR), Asp86, Tyr162, Ser217, and His342.

The protein belongs to the uroporphyrinogen decarboxylase family. Homodimer.

Its subcellular location is the cytoplasm. The enzyme catalyses uroporphyrinogen III + 4 H(+) = coproporphyrinogen III + 4 CO2. Its pathway is porphyrin-containing compound metabolism; protoporphyrin-IX biosynthesis; coproporphyrinogen-III from 5-aminolevulinate: step 4/4. Catalyzes the decarboxylation of four acetate groups of uroporphyrinogen-III to yield coproporphyrinogen-III. The protein is Uroporphyrinogen decarboxylase of Albidiferax ferrireducens (strain ATCC BAA-621 / DSM 15236 / T118) (Rhodoferax ferrireducens).